Consider the following 265-residue polypeptide: Putative 2-amino-3,7-dideoxy-D-threo-hept-6-ulosonate synthase 2 (265 aa).

Asp27 serves as the catalytic Proton acceptor. Residues Asp27–Ser31 and Tyr147–Arg149 contribute to the 1-deoxy-D-threo-hexo-2,5-diulose 6-phosphate site. Residue Tyr147 is the Proton donor of the active site. Residue Lys177 is the Schiff-base intermediate with substrate of the active site. 1-deoxy-D-threo-hexo-2,5-diulose 6-phosphate-binding positions include Gly202–Gly203 and Gly230–Arg231.

It belongs to the DeoC/FbaB aldolase family. ADHS subfamily. As to quaternary structure, homodecamer.

It catalyses the reaction 1-deoxy-D-threo-hexo-2,5-diulose 6-phosphate + L-aspartate 4-semialdehyde = 2,3-dioxopropyl phosphate + 2-amino-2,3,7-trideoxy-D-lyxo-hept-6-ulosonate. Its function is as follows. Catalyzes a transaldol reaction between 6-deoxy-5-ketofructose 1-phosphate (DKFP) and L-aspartate semialdehyde (ASA) with an elimination of hydroxypyruvaldehyde phosphate to yield 2-amino-3,7-dideoxy-D-threo-hept-6-ulosonate (ADH). Plays a key role in an alternative pathway of the biosynthesis of 3-dehydroquinate (DHQ), which is involved in the canonical pathway for the biosynthesis of aromatic amino acids. In Archaeoglobus fulgidus (strain ATCC 49558 / DSM 4304 / JCM 9628 / NBRC 100126 / VC-16), this protein is Putative 2-amino-3,7-dideoxy-D-threo-hept-6-ulosonate synthase 2.